The sequence spans 771 residues: Transducin-like enhancer protein 3-B (771 aa).

Residues 1 to 141 (MYPQGRHPAP…PLTQQQLQAQ (141 aa)) are q domain. Over residues 137–148 (QLQAQHLSHAAH) the composition is skewed to low complexity. Disordered stretches follow at residues 137-174 (QLQA…GSGS) and 196-360 (HHDL…MEAL). The tract at residues 142–209 (HLSHAAHGPP…EHRERESSTN (68 aa)) is GP domain. The segment covering 196–206 (HHDLEHRERES) has biased composition (basic and acidic residues). The span at 207 to 217 (STNNSVSPSDS) shows a compositional bias: low complexity. Positions 210 to 278 (NSVSPSDSLR…TPRVSPSHSP (69 aa)) are ccN domain. 2 stretches are compositionally biased toward basic and acidic residues: residues 219 to 257 (RASE…KSDD) and 282 to 293 (GLDKARALKKDA). Positions 235–238 (KKRR) match the Nuclear localization signal motif. An SP domain region spans residues 279 to 451 (PENGLDKARA…GGKPAYSFHV (173 aa)). Over residues 294 to 309 (PNSPASVASSGSTPSS) the composition is skewed to low complexity. A phosphoserine mark is found at S296 and S299. Residues 310 to 319 (KAKDHPHNDK) are compositionally biased toward basic and acidic residues. Over residues 320-332 (SSTPGLKSNTPTP) the composition is skewed to polar residues. WD repeat units follow at residues 483–521 (SHGE…SKSP), 529–568 (NRDN…PRIK), 573–612 (SSAP…LVRQ), 615–654 (GHTD…QLQQ), 656–695 (DFTS…KYQL), 697–736 (LHES…SIFQ), and 738–771 (KESS…EVIY).

It belongs to the WD repeat Groucho/TLE family. As to expression, at gastrulation, expression is absent within the axial mesoderm. After gastrulation is complete, expressed in the presomitic mesoderm, but expression in the tailbud doesn't begin until the six to seven somite stage, after which it becomes abundant. Expression is abundant throughout somitogenesis within the posterior half of the somites, but is absent from older somites. Also expressed in a dynamic manner within the neural plate.

Its subcellular location is the nucleus. In terms of biological role, transcriptional corepressor that binds to a number of transcription factors. Inhibits the transcriptional activation mediated by CTNNB1 and TCF family members in Wnt signaling. The effects of full-length TLE family members may be modulated by association with dominant-negative AES. This is Transducin-like enhancer protein 3-B from Danio rerio (Zebrafish).